A 463-amino-acid polypeptide reads, in one-letter code: Argininosuccinate lyase (463 aa).

This sequence belongs to the lyase 1 family. Argininosuccinate lyase subfamily.

It localises to the cytoplasm. The enzyme catalyses 2-(N(omega)-L-arginino)succinate = fumarate + L-arginine. Its pathway is amino-acid biosynthesis; L-arginine biosynthesis; L-arginine from L-ornithine and carbamoyl phosphate: step 3/3. In Thiobacillus denitrificans (strain ATCC 25259 / T1), this protein is Argininosuccinate lyase.